A 326-amino-acid polypeptide reads, in one-letter code: Protein TMED8 (326 aa).

The tract at residues 1–80 (MSDLQAAEGP…VSPGSKDATE (80 aa)) is disordered. The 165-residue stretch at 160 to 324 (PPCIWTFAKV…NKTLYFHIYY (165 aa)) folds into the GOLD domain. Lys170 is subject to N6-acetyllysine. The disordered stretch occupies residues 238–268 (DSCDDEDEEEEEEEEIEEPVPAGDVERGSRS). The span at 239–255 (SCDDEDEEEEEEEEIEE) shows a compositional bias: acidic residues.

This is Protein TMED8 (TMED8) from Pongo abelii (Sumatran orangutan).